The chain runs to 238 residues: Thrombin-like enzyme collinein-1 (238 aa).

The Peptidase S1 domain maps to 1-229; sequence VIGGDECNIN…HLDWIQNIIA (229 aa). Intrachain disulfides connect Cys7-Cys141, Cys28-Cys44, Cys78-Cys236, Cys120-Cys190, Cys152-Cys169, and Cys180-Cys205. Residues His43 and Asp88 each act as charge relay system in the active site. Ser184 functions as the Charge relay system in the catalytic mechanism.

Belongs to the peptidase S1 family. Snake venom subfamily. Monomer. In terms of tissue distribution, expressed by the venom gland.

Its subcellular location is the secreted. With respect to regulation, inhibited by Cu(2+) and, to a lesser extent, by Zn(2+) and Ba(2+). Not inhibited by Ca(2+) and Mg(2+). Its function is as follows. Thrombin-like snake venom serine protease. Releases fibrinopeptide A and B in the conversion of fibrinogen to fibrin, with preferential activity on the alpha chain of fibrinogen. Also hydrolyzes N-p-toluensulfonyl arginine ester (TAME) and chromogenic artificial substrates of the blood coagulation cascade: S-2222 for factor Xa, S-2302 for kallikrein and S-2238 for thrombin. When tested in vitro, the recombinant protein does not degrade blood clots, suggesting that this toxin lacks fibrinolytic activity. In addition, it moderately inhibits human Kv10.1/KCNH1/EAG1 currents, with a mechanism independent of its enzymatic activity. It selectively blocks Kv10.1/KCNH1/EAG1 in a time and dose-dependent manner (IC(50)=4.2 uM for native protein and IC(50)=2.5 uM for recombinant protein). It may have a preference in interacting with Kv10.1/KCNH1/EAG1 in its closed state, since the inhibitory effect of the toxin is decreased at more depolarized potentials. Corroboratively, it may have possible antitumor applications, since it reduces the viability of human breast cancer cell line MCF-7, which strongly expresses Kv10.1/KCNH1/EAG1, but does not affect the liver carcinoma and the non-tumorigenic epithelial breast cell lines, which weakly express Kv10.1/KCNH1/EAG1. When tested on peripheral blood mononuclear cells (PBMC), the native protein shows mild cytotoxicity, whereas the recombinant protein does not show any cytotoxicity. Native form is not immununogenic, since it does not induce statistically significant antibody production in mice, whereas recombinant form shows an antibody titer slightly higher than the native form. In vivo, subplantar injection in mice paw induces a discreet paw edema. In addition, intraperitoneal injection of the recombinant protein into mice led to fibrinogen depletion, resulting in the blood incoagulability. This Crotalus durissus collilineatus (Brazilian rattlesnake) protein is Thrombin-like enzyme collinein-1.